Reading from the N-terminus, the 224-residue chain is Ribonuclease HII (224 aa).

The RNase H type-2 domain occupies Ser-7–Gln-217. A divalent metal cation-binding residues include Asp-13, Glu-14, and Asp-111.

Belongs to the RNase HII family. The cofactor is Mn(2+). Mg(2+) is required as a cofactor.

The protein localises to the cytoplasm. It carries out the reaction Endonucleolytic cleavage to 5'-phosphomonoester.. Its function is as follows. Endonuclease that specifically degrades the RNA of RNA-DNA hybrids. This is Ribonuclease HII from Methanocella arvoryzae (strain DSM 22066 / NBRC 105507 / MRE50).